The sequence spans 181 residues: Inner membrane-spanning protein YciB (181 aa).

The next 5 membrane-spanning stretches (helical) occupy residues 22–42 (IYTA…LTYV), 50–70 (MQLI…FLHD), 80–100 (IVYA…RPII), 118–138 (INYA…YVAF), and 148–168 (FKVF…GMYV).

It belongs to the YciB family.

It is found in the cell inner membrane. Its function is as follows. Plays a role in cell envelope biogenesis, maintenance of cell envelope integrity and membrane homeostasis. In Aliivibrio salmonicida (strain LFI1238) (Vibrio salmonicida (strain LFI1238)), this protein is Inner membrane-spanning protein YciB.